Consider the following 210-residue polypeptide: Peroxynitrite isomerase (210 aa).

The GXWXGXG motif lies at 21-27; it reads GQWEGQG. His190 contributes to the heme b binding site.

It belongs to the nitrobindin family. In terms of assembly, homodimer. Heme b is required as a cofactor.

It carries out the reaction peroxynitrite = nitrate. Its pathway is nitrogen metabolism. Its function is as follows. Heme-binding protein able to scavenge peroxynitrite and to protect free L-tyrosine against peroxynitrite-mediated nitration, by acting as a peroxynitrite isomerase that converts peroxynitrite to nitrate. Therefore, this protein likely plays a role in peroxynitrite sensing and in the detoxification of reactive nitrogen and oxygen species (RNS and ROS, respectively). Is able to bind nitric oxide (NO) in vitro, but may act as a sensor of peroxynitrite levels in vivo. In Renibacterium salmoninarum (strain ATCC 33209 / DSM 20767 / JCM 11484 / NBRC 15589 / NCIMB 2235), this protein is Peroxynitrite isomerase.